We begin with the raw amino-acid sequence, 314 residues long: tRNA pseudouridine synthase B (314 aa).

His-43 provides a ligand contact to substrate. Asp-48 serves as the catalytic Nucleophile. Positions 76, 179, and 200 each coordinate substrate.

Belongs to the pseudouridine synthase TruB family. Type 1 subfamily.

The catalysed reaction is uridine(55) in tRNA = pseudouridine(55) in tRNA. In terms of biological role, responsible for synthesis of pseudouridine from uracil-55 in the psi GC loop of transfer RNAs. In Serratia proteamaculans (strain 568), this protein is tRNA pseudouridine synthase B.